The sequence spans 112 residues: Hydrogenase maturation factor HypA (112 aa).

His2 contacts Ni(2+). Zn(2+) is bound by residues Cys72, Cys75, Cys88, and Cys91.

Belongs to the HypA/HybF family.

Functionally, involved in the maturation of [NiFe] hydrogenases. Required for nickel insertion into the metal center of the hydrogenase. This is Hydrogenase maturation factor HypA from Francisella philomiragia subsp. philomiragia (strain ATCC 25017 / CCUG 19701 / FSC 153 / O#319-036).